Here is a 503-residue protein sequence, read N- to C-terminus: UDP-N-acetylmuramoylalanine--D-glutamate ligase (503 aa).

129 to 135 is an ATP binding site; sequence GTNGKTT.

It belongs to the MurCDEF family.

The protein resides in the cytoplasm. It carries out the reaction UDP-N-acetyl-alpha-D-muramoyl-L-alanine + D-glutamate + ATP = UDP-N-acetyl-alpha-D-muramoyl-L-alanyl-D-glutamate + ADP + phosphate + H(+). The protein operates within cell wall biogenesis; peptidoglycan biosynthesis. Cell wall formation. Catalyzes the addition of glutamate to the nucleotide precursor UDP-N-acetylmuramoyl-L-alanine (UMA). This is UDP-N-acetylmuramoylalanine--D-glutamate ligase from Burkholderia vietnamiensis (strain G4 / LMG 22486) (Burkholderia cepacia (strain R1808)).